The chain runs to 200 residues: LexA repressor (200 aa).

A DNA-binding region (H-T-H motif) is located at residues 29–48 (IRDIARAFRITPRGAIVHLN). Active-site for autocatalytic cleavage activity residues include Ser120 and Lys158.

This sequence belongs to the peptidase S24 family. As to quaternary structure, homodimer.

The catalysed reaction is Hydrolysis of Ala-|-Gly bond in repressor LexA.. Represses a number of genes involved in the response to DNA damage (SOS response), including recA and lexA. In the presence of single-stranded DNA, RecA interacts with LexA causing an autocatalytic cleavage which disrupts the DNA-binding part of LexA, leading to derepression of the SOS regulon and eventually DNA repair. In Pseudothermotoga lettingae (strain ATCC BAA-301 / DSM 14385 / NBRC 107922 / TMO) (Thermotoga lettingae), this protein is LexA repressor.